Consider the following 281-residue polypeptide: MEFVKMHGLGNDFIVVNAMEPPLLDREDWEEIAVRICDRHYGIGGDGLILLFPSDKADIRWRILNSDGSEPEMCGNGIRCLARYVYERGIVAKRRIEVETLAGIIVPEIITDAAGAVTGVCVDMGEPRLQRHQIPMVGPEGPAVNQELVVGDAVVRVTALSMGNPHCLIYVNDIDEAPVTTLGPKVEVHPAFPAKTNVEFVQVVAPDEVQMRVWERGAGPTLACGTGACATVVGSVLNGYTDRKVTVHLAGGPLHIEWREENNRVYMTGPAVEVFRGELPL.

N11 and N65 together coordinate substrate. The active-site Proton donor is the C74. Residues 75–76, N164, N197, and 215–216 contribute to the substrate site; these read GN and ER. C224 (proton acceptor) is an active-site residue. 225–226 lines the substrate pocket; sequence GT.

It belongs to the diaminopimelate epimerase family. Homodimer.

It is found in the cytoplasm. The enzyme catalyses (2S,6S)-2,6-diaminopimelate = meso-2,6-diaminopimelate. Its pathway is amino-acid biosynthesis; L-lysine biosynthesis via DAP pathway; DL-2,6-diaminopimelate from LL-2,6-diaminopimelate: step 1/1. In terms of biological role, catalyzes the stereoinversion of LL-2,6-diaminopimelate (L,L-DAP) to meso-diaminopimelate (meso-DAP), a precursor of L-lysine and an essential component of the bacterial peptidoglycan. This is Diaminopimelate epimerase from Heliobacterium modesticaldum (strain ATCC 51547 / Ice1).